Here is a 722-residue protein sequence, read N- to C-terminus: Glycine--tRNA ligase beta subunit (722 aa).

This sequence belongs to the class-II aminoacyl-tRNA synthetase family. Tetramer of two alpha and two beta subunits.

It is found in the cytoplasm. It carries out the reaction tRNA(Gly) + glycine + ATP = glycyl-tRNA(Gly) + AMP + diphosphate. The protein is Glycine--tRNA ligase beta subunit (glyS) of Synechocystis sp. (strain ATCC 27184 / PCC 6803 / Kazusa).